Reading from the N-terminus, the 208-residue chain is Small ribosomal subunit protein uS3 (208 aa).

The KH type-2 domain maps to 16–85 (IDEYFKKELS…KPQIDVKPVE (70 aa)).

It belongs to the universal ribosomal protein uS3 family. In terms of assembly, part of the 30S ribosomal subunit.

Its function is as follows. Binds the lower part of the 30S subunit head. The sequence is that of Small ribosomal subunit protein uS3 from Methanocaldococcus jannaschii (strain ATCC 43067 / DSM 2661 / JAL-1 / JCM 10045 / NBRC 100440) (Methanococcus jannaschii).